Reading from the N-terminus, the 101-residue chain is Parathymosin (101 aa).

Residues M1–A101 are disordered. S2 bears the N-acetylserine mark. S2 is modified (phosphoserine). An N6-acetyllysine modification is found at K4. A phosphoserine mark is found at S5 and S13. Basic and acidic residues predominate over residues S13–V37. Position 15 is an N6-acetyllysine (K15). Over residues V38 to E74 the composition is skewed to acidic residues. Phosphothreonine is present on T52. K91 is subject to N6-acetyllysine.

This sequence belongs to the pro/parathymosin family.

In terms of biological role, parathymosin may mediate immune function by blocking the effect of prothymosin alpha which confers resistance to certain opportunistic infections. The sequence is that of Parathymosin (Ptms) from Mus musculus (Mouse).